The chain runs to 553 residues: MKQGLILKSVLSAAIIASLAGCATAPAQQWEADKTYKLTILHTNDHHGRFWQNQYGEYGMAARKTLIDQLRADIEAQGGSVLLLSGGDINTGVPESDLQDAEPDFKGMSKIGYDAMALGNHEFDNPLEVLFKQKEWANFPMLSANIYDKATGKRLFEPYHIFDKQGIKIAVIGLTTEDTAKIGNPEYIGGIDFRDPKEEAKKVIAELKKKEKPDLIIAVTHMGHYQNGEHGVNAPGDVALARYLPAGELDMIVGGHSQEPVCMEGPNLVKKNFKPGDECKPDIQNGTYIVQAYEWGKYVGRADYEFRNGELNMVSYNLIPVNLKKKVEVNGETQRVFATSEIKEDSAMLEFLRPFQEKGQEQLSIKIAHSNGKLEGDRNVVRFEQTNLGRMIAMAHMQRAKADFAVMNSGGVRDSIQAGDITYKDVLKVQPFGNIVSYVDMNGQEVLDYLNVVATKPVDSGAYAQFAGISMTVADGKVSNVVIGGKQLRLDATYRFTVPSFNAAGGDGYPKITDHPGYVNTGFVDAEVLKDYLEANSPIDVNRFAPAGEIVYR.

The N-terminal stretch at 1–21 (MKQGLILKSVLSAAIIASLAG) is a signal peptide. Residue cysteine 22 is the site of N-palmitoyl cysteine attachment. Cysteine 22 carries the S-diacylglycerol cysteine lipid modification. Residues aspartate 45, histidine 47, aspartate 88, asparagine 120, histidine 221, histidine 256, and glutamine 258 each contribute to the a divalent metal cation site. Residues phenylalanine 432 and 501 to 507 (FNAAGGD) each bind substrate.

The protein belongs to the 5'-nucleotidase family. The cofactor is chloride. It depends on Mg(2+) as a cofactor.

The protein resides in the cell outer membrane. The catalysed reaction is a ribonucleoside 5'-phosphate + H2O = a ribonucleoside + phosphate. Its function is as follows. Degradation of extracellular 5'-nucleotides for nutritional needs. This Vibrio cholerae serotype O1 (strain ATCC 39315 / El Tor Inaba N16961) protein is 5'-nucleotidase (nutA).